Consider the following 163-residue polypeptide: Probable cyclic pyranopterin monophosphate synthase (163 aa).

The tract at residues 1-23 (MPDGDDDALTHTTADGDAQMVDV) is disordered. Substrate contacts are provided by residues 80-82 (MCH) and 116-117 (ME). The active site involves aspartate 131.

This sequence belongs to the MoaC family. In terms of assembly, homohexamer; trimer of dimers.

It catalyses the reaction (8S)-3',8-cyclo-7,8-dihydroguanosine 5'-triphosphate = cyclic pyranopterin phosphate + diphosphate. The protein operates within cofactor biosynthesis; molybdopterin biosynthesis. In terms of biological role, catalyzes the conversion of (8S)-3',8-cyclo-7,8-dihydroguanosine 5'-triphosphate to cyclic pyranopterin monophosphate (cPMP). The chain is Probable cyclic pyranopterin monophosphate synthase from Halobacterium salinarum (strain ATCC 29341 / DSM 671 / R1).